Reading from the N-terminus, the 443-residue chain is Methionine aminopeptidase 2-1 (443 aa).

The tract at residues 1 to 90 is disordered; that stretch reads MAAQADDELN…RVPVSELFPN (90 aa). Residues 33-48 are compositionally biased toward acidic residues; that stretch reads ADNDDSEDDEKEEEGG. Residues 58-73 show a composition bias toward basic residues; sequence KKKKKRKPKKKKKGGA. His-196 lines the substrate pocket. Residues Asp-216, Asp-227, and His-296 each contribute to the a divalent metal cation site. His-304 is a substrate binding site. A divalent metal cation is bound by residues Glu-329 and Glu-424.

The protein belongs to the peptidase M24A family. Methionine aminopeptidase eukaryotic type 2 subfamily. It depends on Co(2+) as a cofactor. Zn(2+) serves as cofactor. The cofactor is Mn(2+). Fe(2+) is required as a cofactor.

The protein resides in the cytoplasm. It catalyses the reaction Release of N-terminal amino acids, preferentially methionine, from peptides and arylamides.. Its function is as follows. Cotranslationally removes the N-terminal methionine from nascent proteins. The N-terminal methionine is often cleaved when the second residue in the primary sequence is small and uncharged (Met-Ala-, Cys, Gly, Pro, Ser, Thr, or Val). The protein is Methionine aminopeptidase 2-1 of Talaromyces stipitatus (strain ATCC 10500 / CBS 375.48 / QM 6759 / NRRL 1006) (Penicillium stipitatum).